Reading from the N-terminus, the 101-residue chain is Urease subunit beta (101 aa).

Belongs to the urease beta subunit family. Heterotrimer of UreA (gamma), UreB (beta) and UreC (alpha) subunits. Three heterotrimers associate to form the active enzyme.

The protein localises to the cytoplasm. It carries out the reaction urea + 2 H2O + H(+) = hydrogencarbonate + 2 NH4(+). The protein operates within nitrogen metabolism; urea degradation; CO(2) and NH(3) from urea (urease route): step 1/1. This Cupriavidus necator (strain ATCC 17699 / DSM 428 / KCTC 22496 / NCIMB 10442 / H16 / Stanier 337) (Ralstonia eutropha) protein is Urease subunit beta.